Here is a 313-residue protein sequence, read N- to C-terminus: MPYSDKMAIESEAPKRCPECHSEHLIRDYEHGELICADCGAVIEDSFIDQGPEWRAFDSDQDERRARTGSPMTYLSHDKGLATEISWSNKDYYGKRIPHKNRAQIYRVRKWHQRIRVSNAAERNLSLALQLLNDIGAKLGIPKDIKETSALIYRKAVEKNLIRGRSIESIVCASIYAACRKVNIPRTLDEIAKASEVNKKKIGKAYRHLAKELDLNLRPTTPFSYIAQFCNKLDLDKQAIVISEDIVRQAMSMGISSGKGPTGIAAAAIYIASVKVGKPRTQKEIARISGVTEVTIRNRYKEISKALNISISE.

The TFIIB-type zinc finger occupies 13–44; that stretch reads APKRCPECHSEHLIRDYEHGELICADCGAVIE. Zn(2+) is bound by residues C17, C20, C36, and C39. A run of 2 repeats spans residues 130–213 and 224–305.

The protein belongs to the TFIIB family.

Stabilizes TBP binding to an archaeal box-A promoter. Also responsible for recruiting RNA polymerase II to the pre-initiation complex (DNA-TBP-TFIIB). This chain is Transcription initiation factor IIB 2, found in Thermoplasma volcanium (strain ATCC 51530 / DSM 4299 / JCM 9571 / NBRC 15438 / GSS1).